A 345-amino-acid chain; its full sequence is MEQLQKRKIYDTTASNASTGILNGKSSNVLNWDDVRFSWAYPLYKNMLANFWTPFEINMSHDAKQFPTLTETEQEAFKKIIGLLAFLDSVQTDYSMRAAEYLTDSSLAALMSVLSFQEVVHNQSYSYVLSSLVPKATQDEIFEYWKHDDVLKERNEFIIDGYEKFVDNPTPKTFLESIVYDVILEGLNFYSGFAFFYNLARNQKMVSTSTMINYINRDEQLHVYLFTNIFKELLVEFPELNTEETKTFVKTTLMKAADLEKDWFRYIIGDKIPGINPEDMETYISFIANKRAVQLGMEKPYPEIKHNPMKWIRAYEDVNSGKSDFFEQKSRQYAKVSADNGFDEL.

Positions 88, 118, and 121 each coordinate Fe cation. Tyr-125 is a catalytic residue. The Fe cation site is built by Glu-185, Glu-219, and His-222.

This sequence belongs to the ribonucleoside diphosphate reductase small chain family. In terms of assembly, tetramer of two alpha and two beta subunits. Requires Fe cation as cofactor.

The catalysed reaction is a 2'-deoxyribonucleoside 5'-diphosphate + [thioredoxin]-disulfide + H2O = a ribonucleoside 5'-diphosphate + [thioredoxin]-dithiol. Its function is as follows. Provides the precursors necessary for DNA synthesis. Catalyzes the biosynthesis of deoxyribonucleotides from the corresponding ribonucleotides. This Halalkalibacterium halodurans (strain ATCC BAA-125 / DSM 18197 / FERM 7344 / JCM 9153 / C-125) (Bacillus halodurans) protein is Ribonucleoside-diphosphate reductase subunit beta (nrdB).